Here is a 126-residue protein sequence, read N- to C-terminus: 5-carboxymethyl-2-hydroxymuconate Delta-isomerase (126 aa).

The active-site Proton acceptor; via imino nitrogen is P2.

In terms of assembly, homotrimer.

The enzyme catalyses (2E,4Z)-5-hydroxypenta-2,4-diene-1,2,5-tricarboxylate = (3E,5R)-5-carboxy-2-oxohept-3-enedioate. The protein operates within aromatic compound metabolism; 4-hydroxyphenylacetate degradation; pyruvate and succinate semialdehyde from 4-hydroxyphenylacetate: step 4/7. Functionally, transforms 5-carboxymethyl-2-hydroxy-muconic acid (CHM) into 5-oxo-pent-3-ene-1,2,5-tricarboxylic acid (OPET). The polypeptide is 5-carboxymethyl-2-hydroxymuconate Delta-isomerase (hpcD) (Escherichia coli).